The sequence spans 752 residues: Reticulon-1-B (752 aa).

4 disordered regions span residues 1-57, 264-319, 334-424, and 444-465; these read MAAN…TSTD, EYPG…SEKQ, KAKE…SPSI, and ESCD…SPMM. Residues 264 to 273 show a composition bias toward polar residues; it reads EYPGNQQGKS. A compositionally biased stretch (basic and acidic residues) spans 334 to 361; sequence KAKEGTKRFSSETNDEKQSRSFHAEKQD. The segment covering 363–383 has biased composition (polar residues); it reads TVMSTEATSASHYTKASSAES. A Reticulon domain is found at 566–752; that stretch reads AIDLLYWRDV…AKIPGTKQKE (187 aa). Transmembrane regions (helical) follow at residues 580-600 and 684-704; these read IVFG…VVSV and VLMW…LLIM.

In terms of tissue distribution, isoform A and isoform C are both expressed in the animal hemisphere (presumptive neural ectoderm) of blastula and gastrula stage embryos, and along the anterior neural border, in the panplacodal primordium, and in the dorsolateral side of archenteron roof of late neurula embryos. At the tailbud stage, expression of the isoforms begin to differ. Isoform A localizes to the cranial placodes including the trigeminal placode, lateral line placode, olfactory placode and otic vesicle. Isoform C localizes to the central nervous system, including the spinal cord, prosencephalon, mesencephalon and rhombencephalon, as well as the lateral line placode, otic vesicle and pronephros.

It localises to the endoplasmic reticulum membrane. The protein localises to the nucleus. In terms of biological role, inhibits amyloid precursor protein processing, probably by blocking BACE1 activity. The sequence is that of Reticulon-1-B (rtn1-b) from Xenopus laevis (African clawed frog).